The sequence spans 306 residues: Mitochondrial brown fat uncoupling protein 1 (306 aa).

Residues 1–10 are Mitochondrial intermembrane-facing; that stretch reads MVGTTATDVA. A helical membrane pass occupies residues 11–32; that stretch reads PTMGVKIFSAGVAACLADVITF. 3 Solcar repeats span residues 11-102, 110-200, and 209-294; these read PTMG…VQEF, PSLR…MKGA, and DDVP…LKRE. At 33 to 73 the chain is on the mitochondrial matrix side; the sequence is PLDTAKVRLQIQGECQTTSGIRYKGVLGTITTLAKTEGPLK. K56 contributes to the fatty acid 16:0 binding site. The helical transmembrane segment at 74–96 threads the bilayer; it reads LYSGLPAGLQRQISFASLRIGLY. Topologically, residues 97–115 are mitochondrial intermembrane; it reads DTVQEFWGGEEATPSLRSK. A helical membrane pass occupies residues 116–132; that stretch reads ICAGLTTGGVAVFIGQP. Topologically, residues 133–177 are mitochondrial matrix; it reads TEVVKVRLQAQSHLHGLKPRYTGTYNAYRIIATTESLSTLWKGTT. A helical membrane pass occupies residues 178–194; that stretch reads PNLLRNIIINCTELVTY. The Mitochondrial intermembrane portion of the chain corresponds to 195-211; sequence DLMKGALVRNDILADDV. A helical membrane pass occupies residues 212–231; sequence PCHLLSALIAGFCTTLLSSP. The Mitochondrial matrix portion of the chain corresponds to 232–265; the sequence is VDVVKTRFINSPQGQYTSVPSCAMSMLTKEGPTA. C253 is modified (cysteine sulfenic acid (-SOH)). Residues 266–288 form a helical membrane-spanning segment; the sequence is FFKGFAPSFLRLASWNVIMFVCF. Residue K268 participates in fatty acid 16:0 binding. The Mitochondrial intermembrane segment spans residues 289–306; the sequence is EKLKRELMKSRQTVDCAT.

It belongs to the mitochondrial carrier (TC 2.A.29) family. As to quaternary structure, most probably functions as a monomer. Binds one purine nucleotide per monomer. However, has also been suggested to function as a homodimer or a homotetramer. Tightly associates with cardiolipin in the mitochondrion inner membrane; may stabilize and regulate its activity. In terms of processing, may undergo sulfenylation upon cold exposure. May increase the sensitivity of UCP1 thermogenic function to the activation by noradrenaline probably through structural effects. Post-translationally, may undergo ubiquitin-mediated proteasomal degradation.

Its subcellular location is the mitochondrion inner membrane. The catalysed reaction is H(+)(in) = H(+)(out). Its activity is regulated as follows. Has no constitutive proton transporter activity and has to be activated by long-chain fatty acids/LCFAs. Inhibited by purine nucleotides. Both purine nucleotides and LCFAs bind the cytosolic side of the transporter and directly compete to activate or inhibit it. Activated by noradrenaline and reactive oxygen species. Despite lacking canonical translational encoding for selenocysteine, a small pool of the protein has been observed to selectively incorporate selenocysteine at 'Cys-253'. Selenocysteine-modified protein is highly sensitive to redox modification and may constitute a pool of protein highly sensitive to activation by elevated levels of reactive oxygen species (ROS). Mitochondrial protein responsible for thermogenic respiration, a specialized capacity of brown adipose tissue and beige fat that participates in non-shivering adaptive thermogenesis to temperature and diet variations and more generally to the regulation of energy balance. Functions as a long-chain fatty acid/LCFA and proton symporter, simultaneously transporting one LCFA and one proton through the inner mitochondrial membrane. However, LCFAs remaining associated with the transporter via their hydrophobic tails, it results in an apparent transport of protons activated by LCFAs. Thereby, dissipates the mitochondrial proton gradient and converts the energy of substrate oxydation into heat instead of ATP. Regulates the production of reactive oxygen species/ROS by mitochondria. This is Mitochondrial brown fat uncoupling protein 1 from Ochotona dauurica (Daurian pika).